We begin with the raw amino-acid sequence, 132 residues long: Large ribosomal subunit protein bL20c (132 aa).

The protein belongs to the bacterial ribosomal protein bL20 family.

It is found in the plastid. The protein localises to the chloroplast. In terms of biological role, binds directly to 23S ribosomal RNA and is necessary for the in vitro assembly process of the 50S ribosomal subunit. It is not involved in the protein synthesizing functions of that subunit. This chain is Large ribosomal subunit protein bL20c, found in Coffea arabica (Arabian coffee).